The following is a 335-amino-acid chain: MSWFTPEVIDVILTVLRAIVVLLAVVVCGALLSFVERRLLGWWQDRYGPNRVGPFGMFQIAADMLKMFFKEDWNPPFVDRVIFTLAPVVAMSALLIAFVVIPITPTWGVADLNIGLLFFFAMAGLSVYAVLFAGWSSNNKYALLGSLRASAQTVSYEVFLGLALMGVVVQVGSFNMRDIVEYQAQNLWFIIPQFFGFCTFFIAGVAVTHRHPFDQPEAEQELADGYHIEYAGMKWGMFFVGEYIGIILISALLVTLFFGGWHGPFGILPQLSFLWFALKTAFFIMLFILLRASIPRPRYDQVMDFSWKFCLPLTLINLLVTAAIVLYNTPAVAAQ.

Transmembrane regions (helical) follow at residues 11 to 31 (VILT…CGAL), 81 to 101 (VIFT…FVVI), 114 to 134 (IGLL…LFAG), 154 to 174 (VSYE…VGSF), 187 to 207 (LWFI…GVAV), 238 to 258 (FFVG…TLFF), 270 to 290 (QLSF…FILL), and 307 to 327 (WKFC…IVLY).

It belongs to the complex I subunit 1 family. In terms of assembly, NDH-1 is composed of 13 different subunits. Subunits NuoA, H, J, K, L, M, N constitute the membrane sector of the complex.

Its subcellular location is the cell inner membrane. The enzyme catalyses a quinone + NADH + 5 H(+)(in) = a quinol + NAD(+) + 4 H(+)(out). NDH-1 shuttles electrons from NADH, via FMN and iron-sulfur (Fe-S) centers, to quinones in the respiratory chain. The immediate electron acceptor for the enzyme in this species is believed to be ubiquinone. Couples the redox reaction to proton translocation (for every two electrons transferred, four hydrogen ions are translocated across the cytoplasmic membrane), and thus conserves the redox energy in a proton gradient. This subunit may bind ubiquinone. This is NADH-quinone oxidoreductase subunit H from Pseudomonas putida (strain ATCC 700007 / DSM 6899 / JCM 31910 / BCRC 17059 / LMG 24140 / F1).